A 244-amino-acid polypeptide reads, in one-letter code: Phosphoadenosine 5'-phosphosulfate reductase (244 aa).

The active-site Nucleophile; cysteine thiosulfonate intermediate is Cys239.

The protein belongs to the PAPS reductase family. CysH subfamily.

It localises to the cytoplasm. The catalysed reaction is [thioredoxin]-disulfide + sulfite + adenosine 3',5'-bisphosphate + 2 H(+) = [thioredoxin]-dithiol + 3'-phosphoadenylyl sulfate. It participates in sulfur metabolism; hydrogen sulfide biosynthesis; sulfite from sulfate: step 3/3. Functionally, catalyzes the formation of sulfite from phosphoadenosine 5'-phosphosulfate (PAPS) using thioredoxin as an electron donor. The chain is Phosphoadenosine 5'-phosphosulfate reductase from Salmonella arizonae (strain ATCC BAA-731 / CDC346-86 / RSK2980).